A 103-amino-acid chain; its full sequence is Co-chaperonin GroES (103 aa).

Belongs to the GroES chaperonin family. As to quaternary structure, heptamer of 7 subunits arranged in a ring. Interacts with the chaperonin GroEL.

Its subcellular location is the cytoplasm. In terms of biological role, together with the chaperonin GroEL, plays an essential role in assisting protein folding. The GroEL-GroES system forms a nano-cage that allows encapsulation of the non-native substrate proteins and provides a physical environment optimized to promote and accelerate protein folding. GroES binds to the apical surface of the GroEL ring, thereby capping the opening of the GroEL channel. In Trichodesmium erythraeum (strain IMS101), this protein is Co-chaperonin GroES.